The chain runs to 96 residues: Tenecin-3 (96 aa).

A signal peptide spans M1–P18. The segment at D19–H96 is disordered. Tandem repeats lie at residues G23–G26, G31–G34, G35–G38, G39–G42, G43–G46, G47–G50, G51–G54, G59–G62, G63–G66, G67–G70, G77–G80, and G86–G89. The 12 X 4 AA repeats of G-X-X-G stretch occupies residues G23 to G89. Gly residues predominate over residues G26–G89.

To H.diomphalia holotricin 3.

The protein resides in the secreted. Functionally, antifungal heat stable protein produced in response to injury. It is active against C.albicans. No antibacterial activity against Gram-positive and Gram-negative bacteria. The polypeptide is Tenecin-3 (Tenebrio molitor (Yellow mealworm beetle)).